Consider the following 461-residue polypeptide: Protein-serine O-palmitoleoyltransferase porcupine (461 aa).

The Cytoplasmic segment spans residues 1–17 (MATFSRQEFFQQLLQGC). Residues 18–38 (LLPTVQQGLDQIWLLLTICFA) form a helical membrane-spanning segment. The Extracellular segment spans residues 39 to 66 (CRLLWRLGLPSYLKHASTVAGGFFSLYH). Residues 67–87 (FFQLHMVWVVLLSLLCYLVLF) traverse the membrane as a helical segment. The Cytoplasmic segment spans residues 88–95 (LCRHSSHR). The helical transmembrane segment at 96 to 116 (GVFLSVTILIYLLMGEMHMVD) threads the bilayer. Residues 117–152 (TVTWHKMRGAQMIVAMKAVSLGFDLDRGEVGAVPSP) are Extracellular-facing. Residues 153-173 (VEFMGYLYFVGTIVFGPWISF) form a helical membrane-spanning segment. At 174–198 (HSYLQAVQGRPLSRRWLKKVARSLA) the chain is on the cytoplasmic side. Residues 199 to 219 (LALLCLVLSTCVGPYLFPYFI) form a helical membrane-spanning segment. Over 220–252 (PLDGDRLLRNKKRKARGTMVRWLRAYESAVSFH) the chain is Extracellular. A helical membrane pass occupies residues 253–273 (FSNYFVGFLSEATATLAGAGF). Topologically, residues 274-337 (TEEKDHLEWD…SAVLVTYAAS (64 aa)) are cytoplasmic. Residues 338–358 (ALLHGFSFHLAAVLLSLAFIT) form a helical membrane-spanning segment. Residue His-341 is part of the active site. Topologically, residues 359–396 (YVEHVLRKRLAQILSACILSKRCLPDCSHRHRLGLGVR) are extracellular. A helical transmembrane segment spans residues 397 to 417 (ALNLLFGALAIFHLSYLGSLF). Residues 418 to 461 (DVDVDDTTEEQGYGMAYTVHKWSELSWASHWVTFGCWIFYRLIG) are Cytoplasmic-facing.

Belongs to the membrane-bound acyltransferase family. Porcupine subfamily. As to quaternary structure, interacts with WNT1, WNT3, WNT3A, WNT4, WNT5A, WNT5B, WNT6, WNT7A and WNT7B. As to expression, expressed in brain, heart, kidney, liver, lung, muscle, spleen and testis. Isoform 4 is strongly expressed in kidney, liver, lung, spleen and testis. Isoform 1 is strongly expressed in brain, heart and muscle and poorly in kidney, liver, lung, spleen and testis.

The protein localises to the endoplasmic reticulum membrane. The catalysed reaction is [Wnt protein]-L-serine + (9Z)-hexadecenoyl-CoA = [Wnt protein]-O-(9Z)-hexadecenoyl-L-serine + CoA. Protein-serine O-palmitoleoyltransferase that acts as a key regulator of the Wnt signaling pathway by mediating the attachment of palmitoleate, a 16-carbon monounsaturated fatty acid (C16:1(9Z)), to Wnt proteins. Serine palmitoleoylation of WNT proteins is required for efficient binding to frizzled receptors. In Mus musculus (Mouse), this protein is Protein-serine O-palmitoleoyltransferase porcupine.